The sequence spans 512 residues: Amidase 2 (512 aa).

Residues K122 and S197 each act as charge relay system in the active site. Residues S197 and 218–221 contribute to the substrate site; that span reads IGGS. S221 (acyl-ester intermediate) is an active-site residue.

Belongs to the amidase family.

It carries out the reaction a monocarboxylic acid amide + H2O = a monocarboxylate + NH4(+). Its pathway is xenobiotic degradation. In terms of biological role, amidase; part of the Fusarium detoxification of benzoxazolinone cluster 2 (FDB2) involved in the degradation of benzoxazolinones produced by the host plant. Maize, wheat, and rye produce the 2 benzoxazinone phytoanticipins 2,4-dihy-droxy-7-methoxy-1,4-benzoxazin-3-one (DIMBOA) and 2,4-dihydroxy-1,4-benzoxazin-3-one (DIBOA) that, due to their inherent instability once released, spontaneously degrade to the more stable corresponding benzoxazolinones, 6-methoxy-2-benzoxazolinone (MBOA) and 2-benzoxazolinone (BOA), respectively. The first step in the detoxification of benzoxazolinones involves the hydrolysis of the cyclic ester bond of benzoxazolinones by the FDB1 cluster gamma-lactamase MBL1 to aminophenols. MBL1 is able to convert BOA into 2-aminophenol (2-AP), as well as MBOA into 5-methoxy-2-aminophenol (2-AMP). The FDB2 cluster N-malonyltransferase FDB2/NAT1 then metabolizes aminophenols via N-malonylation to non-toxic malonamic acids. FDB2/NAT1 converts 2-AP into N-(2-hydroxyphenyl) malonamic acid (HPMA) and 2-AMP into N-(2-hydroxy-4-methoxyphenyl) malonamic acid (HMPMA). The duplicated dienlactone hydrolases DLH1 and DLH2 may provide redundant function for hydrolyzing the lactone moiety in the BOA molecule. The roles of the amidases an other enzymes encoded by the 2 FDB clusters have not been identified so far. This is Amidase 2 from Gibberella moniliformis (strain M3125 / FGSC 7600) (Maize ear and stalk rot fungus).